The sequence spans 944 residues: Putative ATP-dependent RNA helicase (944 aa).

Positions Thr66–Leu235 constitute a Helicase ATP-binding domain. His79 to Thr86 serves as a coordination point for ATP. The DEAH box signature appears at Asp183–His186. A Helicase C-terminal domain is found at Cys451–Gln523.

This sequence belongs to the DEAD box helicase family. DEAH subfamily.

The catalysed reaction is ATP + H2O = ADP + phosphate + H(+). This is Putative ATP-dependent RNA helicase from Heliothis virescens ascovirus 3e (HvAV-3e).